The following is a 329-amino-acid chain: 4-hydroxythreonine-4-phosphate dehydrogenase (329 aa).

The substrate site is built by His136 and Thr137. Residues His166, His211, and His266 each coordinate a divalent metal cation. Residues Lys274, Asn283, and Arg292 each contribute to the substrate site.

The protein belongs to the PdxA family. As to quaternary structure, homodimer. The cofactor is Zn(2+). Requires Mg(2+) as cofactor. It depends on Co(2+) as a cofactor.

The protein resides in the cytoplasm. The catalysed reaction is 4-(phosphooxy)-L-threonine + NAD(+) = 3-amino-2-oxopropyl phosphate + CO2 + NADH. Its pathway is cofactor biosynthesis; pyridoxine 5'-phosphate biosynthesis; pyridoxine 5'-phosphate from D-erythrose 4-phosphate: step 4/5. Functionally, catalyzes the NAD(P)-dependent oxidation of 4-(phosphooxy)-L-threonine (HTP) into 2-amino-3-oxo-4-(phosphooxy)butyric acid which spontaneously decarboxylates to form 3-amino-2-oxopropyl phosphate (AHAP). This Salmonella typhi protein is 4-hydroxythreonine-4-phosphate dehydrogenase.